Reading from the N-terminus, the 142-residue chain is Large ribosomal subunit protein uL11 (142 aa).

Belongs to the universal ribosomal protein uL11 family. As to quaternary structure, part of the ribosomal stalk of the 50S ribosomal subunit. Interacts with L10 and the large rRNA to form the base of the stalk. L10 forms an elongated spine to which L12 dimers bind in a sequential fashion forming a multimeric L10(L12)X complex. In terms of processing, one or more lysine residues are methylated.

Its function is as follows. Forms part of the ribosomal stalk which helps the ribosome interact with GTP-bound translation factors. This Klebsiella pneumoniae subsp. pneumoniae (strain ATCC 700721 / MGH 78578) protein is Large ribosomal subunit protein uL11.